The sequence spans 472 residues: Carboxypeptidase Q (472 aa).

The N-terminal stretch at 1 to 20 (MRFLFFLFVAVVHLFSLGSG) is a signal peptide. Positions 21-44 (KAIYKSGVSQRTFQEIKEEIANYE) are excised as a propeptide. N-linked (GlcNAc...) asparagine glycosylation occurs at asparagine 61. Residues histidine 290 and aspartate 302 each coordinate Zn(2+). Catalysis depends on glutamate 336, which acts as the Nucleophile. Zn(2+) is bound at residue glutamate 337. Asparagine 353 carries an N-linked (GlcNAc...) asparagine glycan. Aspartate 364 is a Zn(2+) binding site. An N-linked (GlcNAc...) asparagine glycan is attached at asparagine 396. Histidine 434 lines the Zn(2+) pocket.

Belongs to the peptidase M28 family. As to quaternary structure, homodimer. The monomeric form is inactive while the homodimer is active. In terms of processing, N-glycosylated. The secreted form is modified by hybrid or complex type oligosaccharide chains.

It is found in the endoplasmic reticulum. The protein resides in the golgi apparatus. The protein localises to the lysosome. It localises to the secreted. In terms of biological role, carboxypeptidase that may play an important role in the hydrolysis of circulating peptides. Catalyzes the hydrolysis of dipeptides with unsubstituted terminals into amino acids. May play a role in the liberation of thyroxine hormone from its thyroglobulin (Tg) precursor. The protein is Carboxypeptidase Q (Cpq) of Rattus norvegicus (Rat).